The chain runs to 341 residues: Pectate trisaccharide-lyase (341 aa).

The first 27 residues, 1-27 (MKKLISIIFIFVLGVVGSLTAAVSAEA), serve as a signal peptide directing secretion. The propeptide occupies 28–39 (ASALNSGKVNPL). 2 PbH1 repeats span residues 131 to 156 (ANNI…GIEG) and 158 to 186 (SKNI…FDVK). Residues aspartate 150, aspartate 180, and aspartate 184 each contribute to the Ca(2+) site. Arginine 233 is an active-site residue. 2 PbH1 repeats span residues 262-283 (GARI…VSWY) and 287-322 (PGYW…SLDN).

The protein belongs to the polysaccharide lyase 1 family. The cofactor is Ca(2+).

The protein localises to the secreted. It catalyses the reaction eliminative cleavage of unsaturated trigalacturonate as the major product from the reducing end of polygalacturonic acid/pectate.. Cleaves unsaturated oligo-galacturonides from pectin. The major product is trigalacturonate; digalacturonate and tetragalacturonate are also produced. Activity on methylated pectins decreases with an increasing degree of methylation. The polypeptide is Pectate trisaccharide-lyase (Bacillus licheniformis (strain ATCC 14580 / DSM 13 / JCM 2505 / CCUG 7422 / NBRC 12200 / NCIMB 9375 / NCTC 10341 / NRRL NRS-1264 / Gibson 46)).